Here is a 248-residue protein sequence, read N- to C-terminus: Probable transcriptional regulatory protein Rsph17025_0577 (248 aa).

The disordered stretch occupies residues 1 to 21; sequence MAGHSKWANIQHRKGKQDKLR.

Belongs to the TACO1 family.

It localises to the cytoplasm. This chain is Probable transcriptional regulatory protein Rsph17025_0577, found in Cereibacter sphaeroides (strain ATCC 17025 / ATH 2.4.3) (Rhodobacter sphaeroides).